The primary structure comprises 972 residues: POM121-like protein 2 (972 aa).

6 disordered regions span residues 1-67 (MGSY…PANP), 281-302 (LKKA…SGQL), 328-359 (TEED…IPEM), 406-431 (GISS…PVTD), 676-726 (LGLS…AIDG), and 953-972 (SKTL…TYKK). Residues 40–57 (RVQHVHRAQPARRHRPAR) are compositionally biased toward basic residues. Polar residues-rich tracts occupy residues 287–302 (SPNS…SGQL) and 339–352 (VPSN…TGTA). The span at 413-431 (PSIASTQASPSSPTTPVTD) shows a compositional bias: low complexity. A compositionally biased stretch (polar residues) spans 677–696 (GLSSTNQPPVTSSNSNVTSA). Low complexity predominate over residues 697 to 706 (LTSSLGSSPK).

The protein belongs to the POM121 family.

This is POM121-like protein 2 (Pom121l2) from Mus musculus (Mouse).